We begin with the raw amino-acid sequence, 325 residues long: Tartrate-resistant acid phosphatase type 5 (325 aa).

Residues Met-1–Gly-21 form the signal peptide. Residues Asp-33, Asp-71, Tyr-74, and Asn-110 each contribute to the Fe cation site. N-linked (GlcNAc...) asparagine glycans are attached at residues Asn-116 and Asn-147. Cysteines 161 and 219 form a disulfide. Fe cation-binding residues include His-205, His-240, and His-242.

It belongs to the metallophosphoesterase superfamily. Purple acid phosphatase family. In terms of assembly, exists either as monomer or, after proteolytic processing, as a dimer of two chains linked by disulfide bond(s). Fe cation serves as cofactor.

The protein localises to the lysosome. The enzyme catalyses a phosphate monoester + H2O = an alcohol + phosphate. In terms of biological role, involved in osteopontin/bone sialoprotein dephosphorylation. Its expression seems to increase in certain pathological states such as Gaucher and Hodgkin diseases, the hairy cell, the B-cell, and the T-cell leukemias. The polypeptide is Tartrate-resistant acid phosphatase type 5 (ACP5) (Homo sapiens (Human)).